A 205-amino-acid polypeptide reads, in one-letter code: Probable NAD(P)H dehydrogenase (quinone) FQR1-like 1 (205 aa).

In terms of domain architecture, Flavodoxin-like spans 5–192 (VYIVYYSMYG…GQAFHQGKYI (188 aa)). FMN contacts are provided by residues 11–15 (SMYGH), 112–165 (IFYS…SPYG), and H136. NAD(+) is bound at residue Y13.

The protein belongs to the WrbA family. Requires FMN as cofactor.

The protein resides in the cell membrane. The catalysed reaction is a quinone + NADH + H(+) = a quinol + NAD(+). It catalyses the reaction a quinone + NADPH + H(+) = a quinol + NADP(+). Catalyzes the transfer of electrons from NADH and NADPH to reduce quinone to the hydroquinone state. This is Probable NAD(P)H dehydrogenase (quinone) FQR1-like 1 from Arabidopsis thaliana (Mouse-ear cress).